The chain runs to 318 residues: UDP-N-acetylenolpyruvoylglucosamine reductase (318 aa).

Positions 38-204 (IGGICPVVVE…LGIEILLKEG (167 aa)) constitute an FAD-binding PCMH-type domain. Arg-182 is a catalytic residue. The disordered stretch occupies residues 212 to 232 (SLKDKRDRRNSSQPENKKSAG). Basic and acidic residues predominate over residues 213-229 (LKDKRDRRNSSQPENKK). Ser-233 acts as the Proton donor in catalysis. Residue Glu-310 is part of the active site.

It belongs to the MurB family. The cofactor is FAD.

It is found in the cytoplasm. The enzyme catalyses UDP-N-acetyl-alpha-D-muramate + NADP(+) = UDP-N-acetyl-3-O-(1-carboxyvinyl)-alpha-D-glucosamine + NADPH + H(+). It functions in the pathway cell wall biogenesis; peptidoglycan biosynthesis. Its function is as follows. Cell wall formation. The protein is UDP-N-acetylenolpyruvoylglucosamine reductase of Leptospira borgpetersenii serovar Hardjo-bovis (strain JB197).